The sequence spans 687 residues: Glycine--tRNA ligase beta subunit (687 aa).

This sequence belongs to the class-II aminoacyl-tRNA synthetase family. As to quaternary structure, tetramer of two alpha and two beta subunits.

It is found in the cytoplasm. It catalyses the reaction tRNA(Gly) + glycine + ATP = glycyl-tRNA(Gly) + AMP + diphosphate. This Neisseria meningitidis serogroup C (strain 053442) protein is Glycine--tRNA ligase beta subunit.